The following is a 379-amino-acid chain: Queuine tRNA-ribosyltransferase (379 aa).

The Proton acceptor role is filled by Asp-94. Substrate is bound by residues Asp-94 to Phe-98, Asp-148, Gln-191, and Gly-218. The segment at Gly-249–Ser-255 is RNA binding. Asp-268 serves as the catalytic Nucleophile. The segment at Thr-273–Arg-277 is RNA binding; important for wobble base 34 recognition. Zn(2+) contacts are provided by Cys-306, Cys-308, Cys-311, and His-337.

This sequence belongs to the queuine tRNA-ribosyltransferase family. Homodimer. Within each dimer, one monomer is responsible for RNA recognition and catalysis, while the other monomer binds to the replacement base PreQ1. The cofactor is Zn(2+).

The catalysed reaction is 7-aminomethyl-7-carbaguanine + guanosine(34) in tRNA = 7-aminomethyl-7-carbaguanosine(34) in tRNA + guanine. It participates in tRNA modification; tRNA-queuosine biosynthesis. Functionally, catalyzes the base-exchange of a guanine (G) residue with the queuine precursor 7-aminomethyl-7-deazaguanine (PreQ1) at position 34 (anticodon wobble position) in tRNAs with GU(N) anticodons (tRNA-Asp, -Asn, -His and -Tyr). Catalysis occurs through a double-displacement mechanism. The nucleophile active site attacks the C1' of nucleotide 34 to detach the guanine base from the RNA, forming a covalent enzyme-RNA intermediate. The proton acceptor active site deprotonates the incoming PreQ1, allowing a nucleophilic attack on the C1' of the ribose to form the product. After dissociation, two additional enzymatic reactions on the tRNA convert PreQ1 to queuine (Q), resulting in the hypermodified nucleoside queuosine (7-(((4,5-cis-dihydroxy-2-cyclopenten-1-yl)amino)methyl)-7-deazaguanosine). This is Queuine tRNA-ribosyltransferase from Bacillus mycoides (strain KBAB4) (Bacillus weihenstephanensis).